The following is an 853-amino-acid chain: Wolframin (853 aa).

The tract at residues Lys139–Glu179 is disordered. Positions Lys144–Arg157 are enriched in basic residues. The span at Gly169–Glu179 shows a compositional bias: acidic residues. The next 10 membrane-spanning stretches (helical) occupy residues Met238 to Val258, Ser259 to Trp279, Leu285 to Leu305, Leu347 to Trp367, Leu373 to Ser393, Phe446 to Ala466, Gly473 to Ala493, Ile513 to Ile533, Trp545 to Asn565, and Ile572 to Met592. Residues Asn694 and Asn769 are each glycosylated (N-linked (GlcNAc...) asparagine).

Detected in adult brain.

Its subcellular location is the membrane. It localises to the endoplasmic reticulum. It is found in the mitochondrion. Its function is as follows. Participates in the regulation of cellular Ca(2+) homeostasis, at least partly, by modulating the filling state of the endoplasmic reticulum Ca(2+) store. In neurons and glial cells, has a role in maintaining neuronal function and integrity during aging. The chain is Wolframin from Drosophila melanogaster (Fruit fly).